An 86-amino-acid polypeptide reads, in one-letter code: Small ribosomal subunit protein bS20 (86 aa).

A disordered region spans residues 1-25 (MANIKSAIKRAKTSEKRRVANSQEK).

Belongs to the bacterial ribosomal protein bS20 family.

In terms of biological role, binds directly to 16S ribosomal RNA. This chain is Small ribosomal subunit protein bS20, found in Exiguobacterium sp. (strain ATCC BAA-1283 / AT1b).